Here is a 271-residue protein sequence, read N- to C-terminus: D-methionine-binding lipoprotein MetQ (271 aa).

A signal peptide spans 1 to 22 (MSLKFKSIAAISALIGTLTLVG). A lipid anchor (N-palmitoyl cysteine) is attached at Cys23. The S-diacylglycerol cysteine moiety is linked to residue Cys23.

This sequence belongs to the NlpA lipoprotein family.

Its subcellular location is the cell membrane. This protein is a component of a D-methionine permease, a binding protein-dependent, ATP-driven transport system. This chain is D-methionine-binding lipoprotein MetQ (metQ), found in Yersinia pestis.